We begin with the raw amino-acid sequence, 313 residues long: MTDQMRDMIAQLMGSQHVDNKEKPSMPFDHHSVCRAFLLGVCPHDMVPDSRLQNVVSCRKVHEPAHKADYERAQKEKDHFYDVDAFEIIEHAVHLVDIEIAKVREKLEDDVKTQTSQAADSKAKQVAEIEEKIAKNVDDIEKLGNEGKIEESMKLHKYVEELREKIQEIEDSQTEVKTAGPGSNSAKLRVCEDCGAQLNITDHESRIADHYNGKMHIGMVETRETYLKMKETIDERRKEREEKLGSQRGYQRRESYGRRDRGGDRGEYRGDRDRDRRNRDRSRSRDRSYRRDDRGDRRYDRDNRDRRDRDRRY.

The disordered stretch occupies residues 237 to 313; it reads RKEREEKLGS…RDRRDRDRRY (77 aa).

This sequence belongs to the Luc7 family.

In Caenorhabditis elegans, this protein is LUC7-related splicing factor homolog.